Reading from the N-terminus, the 396-residue chain is MAKAKFERTKPHVNIGTIGHVDHGKTTLTAAITKVLHDKYPDLNESRAFDQIDNAPEERQRGITINISHVEYQTDKRHYAHVDAPGHADYIKNMITGAAQMDGAILVVAATDGPMPQTREHVLLARQVGVPYILVALNKADMVDDEELIELVEMEVRELLAAQDFDEEAPVVKVSALKALEGDEKWVKSVEELMEAVDESIPDPVRETDKPFLMPVEDVFTITGRGTVVTGRVERGIINVNEEVEIVGIRPDTTKTTVTGVEMFRKLLDQGQAGDNVGLLLRGIKREDVERGQVVVKPGTTTPHTDFEGSVYILSKDEGGRHTPFFNNYRPQFYFRTTDVTGVVTLPEGTEMVMPGDNTDISVKLIQPVAMDEGLRFAIREGGRTVGAGRVTKIIK.

Positions 10 to 205 constitute a tr-type G domain; the sequence is KPHVNIGTIG…AVDESIPDPV (196 aa). The interval 19–26 is G1; the sequence is GHVDHGKT. 19-26 serves as a coordination point for GTP; the sequence is GHVDHGKT. Thr26 provides a ligand contact to Mg(2+). Residues 62 to 66 form a G2 region; that stretch reads GITIN. A G3 region spans residues 83–86; the sequence is DAPG. GTP is bound by residues 83–87 and 138–141; these read DAPGH and NKAD. Residues 138 to 141 form a G4 region; sequence NKAD. Residues 175–177 form a G5 region; the sequence is SAL.

The protein belongs to the TRAFAC class translation factor GTPase superfamily. Classic translation factor GTPase family. EF-Tu/EF-1A subfamily. As to quaternary structure, monomer.

The protein localises to the cytoplasm. It catalyses the reaction GTP + H2O = GDP + phosphate + H(+). In terms of biological role, GTP hydrolase that promotes the GTP-dependent binding of aminoacyl-tRNA to the A-site of ribosomes during protein biosynthesis. The protein is Elongation factor Tu of Mycolicibacterium vanbaalenii (strain DSM 7251 / JCM 13017 / BCRC 16820 / KCTC 9966 / NRRL B-24157 / PYR-1) (Mycobacterium vanbaalenii).